The primary structure comprises 363 residues: Fructose-bisphosphate aldolase (363 aa).

Substrate is bound by residues Arg56 and Lys147. The active-site Proton acceptor is the Glu188. Lys230 serves as the catalytic Schiff-base intermediate with dihydroxyacetone-P.

The protein belongs to the class I fructose-bisphosphate aldolase family.

It carries out the reaction beta-D-fructose 1,6-bisphosphate = D-glyceraldehyde 3-phosphate + dihydroxyacetone phosphate. The protein operates within carbohydrate degradation; glycolysis; D-glyceraldehyde 3-phosphate and glycerone phosphate from D-glucose: step 4/4. In Echinococcus multilocularis (Fox tapeworm), this protein is Fructose-bisphosphate aldolase (FBPA).